We begin with the raw amino-acid sequence, 33 residues long: MNIEVIAQLTMLTIAVITGPLVIFFLAIRKGNL.

Residues 5–25 (VIAQLTMLTIAVITGPLVIFF) traverse the membrane as a helical segment.

This sequence belongs to the Psb30/Ycf12 family. As to quaternary structure, PSII is composed of 1 copy each of membrane proteins PsbA, PsbB, PsbC, PsbD, PsbE, PsbF, PsbH, PsbI, PsbJ, PsbK, PsbL, PsbM, PsbT, PsbX, PsbY, PsbZ, Psb30/Ycf12, peripheral proteins of the oxygen-evolving complex and a large number of cofactors. It forms dimeric complexes.

It is found in the plastid. The protein localises to the chloroplast thylakoid membrane. Its function is as follows. A core subunit of photosystem II (PSII), probably helps stabilize the reaction center. The chain is Photosystem II reaction center protein Psb30 from Welwitschia mirabilis (Tree tumbo).